The chain runs to 401 residues: DNA replication and repair protein RecF (401 aa).

An ATP-binding site is contributed by 30 to 37 (GYNGIGKT).

Belongs to the RecF family.

It localises to the cytoplasm. The RecF protein is involved in DNA metabolism; it is required for DNA replication and normal SOS inducibility. RecF binds preferentially to single-stranded, linear DNA. It also seems to bind ATP. In Arthrobacter sp. (strain FB24), this protein is DNA replication and repair protein RecF.